Here is a 282-residue protein sequence, read N- to C-terminus: Protein-export membrane protein SecF (282 aa).

6 helical membrane-spanning segments follow: residues 16–36 (MVALPLCLLILSVIFLAFNTV), 126–146 (QAIWALLFAFVLMAIVVFVAF), 148–168 (IFIPSVAVVLSAFSDIVITAA), 169–189 (FMDVFGLTLSLGTTAALLMLI), 221–241 (GIIMTTTTLAAVVVMFIVFSL), and 253–273 (VLIIGLIIDMMNTWMLNAGLL).

It belongs to the SecD/SecF family. SecF subfamily. Part of the protein translocation apparatus. Forms a complex with SecD.

Its subcellular location is the cell membrane. Its function is as follows. Involved in protein export. This is Protein-export membrane protein SecF from Methanolacinia petrolearia (strain DSM 11571 / OCM 486 / SEBR 4847) (Methanoplanus petrolearius).